We begin with the raw amino-acid sequence, 245 residues long: MYPVDLHMHTIASTHAYSTLHDYIAEAKLKNIKLFAITDHGPDMADAPHYWHFMNMRVWPRLVDGVGILRGIEANIKNLDGDIDCTGPMLDAIDLLIAGFHEPVFPPQDKAANTQAMIATMAQGNVHIISHPGNPKYPVDIKAIAEAAAKYNVALELNNSSFTHSRKGSETNCRAIAEAVRDAGGWLALGSDSHIAYSLGIFEHCERIIAEVNFPQERILNVSPRRLLNFLEQRGRAPIPELAGL.

The Zn(2+) site is built by H7, H9, H15, H40, E73, H101, H131, D192, and H194.

The protein belongs to the PHP family. As to quaternary structure, homotrimer. Requires Zn(2+) as cofactor.

This Yersinia enterocolitica serotype O:8 / biotype 1B (strain NCTC 13174 / 8081) protein is Probable phosphatase YE2421.